The following is a 257-amino-acid chain: uncharacterized protein (257 aa).

The NAD(+) site is built by Asp-34, Asp-60, Val-61, Asn-87, Tyr-152, and Lys-156. Catalysis depends on Tyr-152, which acts as the Proton acceptor.

This sequence belongs to the short-chain dehydrogenases/reductases (SDR) family.

This is an uncharacterized protein from Bacillus subtilis (strain 168).